Consider the following 268-residue polypeptide: tRNA pseudouridine synthase A (268 aa).

The active-site Nucleophile is aspartate 52. Substrate is bound at residue tyrosine 110.

The protein belongs to the tRNA pseudouridine synthase TruA family. Homodimer.

The catalysed reaction is uridine(38/39/40) in tRNA = pseudouridine(38/39/40) in tRNA. In terms of biological role, formation of pseudouridine at positions 38, 39 and 40 in the anticodon stem and loop of transfer RNAs. The protein is tRNA pseudouridine synthase A of Prochlorococcus marinus (strain MIT 9301).